A 68-amino-acid polypeptide reads, in one-letter code: UPF0434 protein BURPS668_0926 (68 aa).

Belongs to the UPF0434 family.

The chain is UPF0434 protein BURPS668_0926 from Burkholderia pseudomallei (strain 668).